Reading from the N-terminus, the 55-residue chain is ATP synthase F(0) complex subunit 8 (55 aa).

A helical transmembrane segment spans residues 4–24; that stretch reads LNPSPWLLILLFSWLIFLTML. The disordered stretch occupies residues 36–55; the sequence is MPSTQNMCKQEPEPWTWPWA.

It belongs to the ATPase protein 8 family. Component of the ATP synthase complex composed at least of ATP5F1A/subunit alpha, ATP5F1B/subunit beta, ATP5MC1/subunit c (homooctomer), MT-ATP6/subunit a, MT-ATP8/subunit 8, ATP5ME/subunit e, ATP5MF/subunit f, ATP5MG/subunit g, ATP5MK/subunit k, ATP5MJ/subunit j, ATP5F1C/subunit gamma, ATP5F1D/subunit delta, ATP5F1E/subunit epsilon, ATP5PF/subunit F6, ATP5PB/subunit b, ATP5PD/subunit d, ATP5PO/subunit OSCP. ATP synthase complex consists of a soluble F(1) head domain (subunits alpha(3) and beta(3)) - the catalytic core - and a membrane F(0) domain - the membrane proton channel (subunits c, a, 8, e, f, g, k and j). These two domains are linked by a central stalk (subunits gamma, delta, and epsilon) rotating inside the F1 region and a stationary peripheral stalk (subunits F6, b, d, and OSCP).

The protein resides in the mitochondrion membrane. Its function is as follows. Subunit 8, of the mitochondrial membrane ATP synthase complex (F(1)F(0) ATP synthase or Complex V) that produces ATP from ADP in the presence of a proton gradient across the membrane which is generated by electron transport complexes of the respiratory chain. ATP synthase complex consist of a soluble F(1) head domain - the catalytic core - and a membrane F(1) domain - the membrane proton channel. These two domains are linked by a central stalk rotating inside the F(1) region and a stationary peripheral stalk. During catalysis, ATP synthesis in the catalytic domain of F(1) is coupled via a rotary mechanism of the central stalk subunits to proton translocation. In vivo, can only synthesize ATP although its ATP hydrolase activity can be activated artificially in vitro. Part of the complex F(0) domain. The sequence is that of ATP synthase F(0) complex subunit 8 from Latimeria chalumnae (Coelacanth).